A 486-amino-acid polypeptide reads, in one-letter code: MENKKLTAANGRPIADNQNSQTAGPRGPIMLQDPWLIEKLAHFDREVIPERRMHAKGSGAYGTFTVTHDITKYTRAAIFSQVGKQTECFVRFSTVAGERGAADAERDIRGFAMKFYTEEGNWDLVGNNTPVFFLRDPLKFPDLNHAVKRDPRNNMRSANNNWDFWTLLPEALHQVTITMSPRGIPASYRHMHGFGSHTYSFLNAENKRIWVKFHLKTMQGIKNLTDQEAEAIIAKDRESHQRDLYESIERGDFPKWKFQIQLMTEEEADNYRINPFDLTKVWPHKDFPLQDVGILELNRNPENYFAEVEQSAFNPMNIVEGIGFSPDKMLQGRLFSYGDAQRYRLGVNSEQIPVNKPRCPFHAFHRDGAMRVDGNYGSAKGYEPNSYGEWQDSPEKKEPPLKVHGDVFNYNEREYDDDYYSQPGDLFRLMPADEQQLLFENTARAMGDAELFIKQRHVRNCYKADPAYGTGVAQALGIDLEEALKE.

The disordered stretch occupies residues 1 to 28; that stretch reads MENKKLTAANGRPIADNQNSQTAGPRGP. Catalysis depends on residues histidine 54 and asparagine 127. Tyrosine 337 lines the heme pocket.

The protein belongs to the catalase family. In terms of assembly, homodimer. Heme is required as a cofactor.

It carries out the reaction 2 H2O2 = O2 + 2 H2O. Functionally, decomposes hydrogen peroxide into water and oxygen; serves to protect cells from the toxic effects of hydrogen peroxide. May be involved in aerotolerance of B.fragilis. The protein is Catalase (katA) of Bacteroides fragilis (strain YCH46).